The following is a 639-amino-acid chain: Protein phosphatase 2C 35 (639 aa).

Positions 227-630 constitute a PPM-type phosphatase domain; it reads GGDPCGLQWA…DDVSVIVISL (404 aa). Positions 262 and 263 each coordinate Mn(2+). The tract at residues 295–341 is disordered; it reads QNVQHDQRPDQPGSAPSTTASDNQDQWGRRRRTRRSRPPRGADDDQR. The segment covering 308-320 has biased composition (polar residues); the sequence is SAPSTTASDNQDQ. The segment covering 323-332 has biased composition (basic residues); the sequence is RRRRTRRSRP. Mn(2+)-binding residues include aspartate 558 and aspartate 621.

Belongs to the PP2C family. As to quaternary structure, interacts with XA21 (via juxtamembrane and kinase domains). Mg(2+) serves as cofactor. Requires Mn(2+) as cofactor.

It is found in the cell membrane. It carries out the reaction O-phospho-L-seryl-[protein] + H2O = L-seryl-[protein] + phosphate. It catalyses the reaction O-phospho-L-threonyl-[protein] + H2O = L-threonyl-[protein] + phosphate. Its function is as follows. Protein phosphatase that acts on XA21 pathogen recognition receptor. Negatively regulates cell death and XA21-mediated innate immunity. This Oryza sativa subsp. japonica (Rice) protein is Protein phosphatase 2C 35 (XB15).